The following is a 99-amino-acid chain: NADH-quinone oxidoreductase subunit K (99 aa).

A run of 3 helical transmembrane segments spans residues 3-23 (PANY…GVLV), 28-48 (IVVF…LVTF), and 59-79 (IMAF…LAII).

It belongs to the complex I subunit 4L family. In terms of assembly, NDH-1 is composed of 14 different subunits. Subunits NuoA, H, J, K, L, M, N constitute the membrane sector of the complex.

Its subcellular location is the cell membrane. It carries out the reaction a quinone + NADH + 5 H(+)(in) = a quinol + NAD(+) + 4 H(+)(out). Functionally, NDH-1 shuttles electrons from NADH, via FMN and iron-sulfur (Fe-S) centers, to quinones in the respiratory chain. The immediate electron acceptor for the enzyme in this species is believed to be a menaquinone. Couples the redox reaction to proton translocation (for every two electrons transferred, four hydrogen ions are translocated across the cytoplasmic membrane), and thus conserves the redox energy in a proton gradient. The chain is NADH-quinone oxidoreductase subunit K from Frankia casuarinae (strain DSM 45818 / CECT 9043 / HFP020203 / CcI3).